The primary structure comprises 85 residues: Large ribosomal subunit protein bL27 (85 aa).

Residues 1 to 24 form a disordered region; the sequence is MAHKKAGGSSRNGRDSNSKRLGVK.

Belongs to the bacterial ribosomal protein bL27 family.

The protein is Large ribosomal subunit protein bL27 of Nitrosospira multiformis (strain ATCC 25196 / NCIMB 11849 / C 71).